Consider the following 143-residue polypeptide: Large ribosomal subunit protein uL16c (143 aa).

Belongs to the universal ribosomal protein uL16 family. Part of the 50S ribosomal subunit.

Its subcellular location is the plastid. The protein localises to the chloroplast. This is Large ribosomal subunit protein uL16c from Cyanidioschyzon merolae (strain NIES-3377 / 10D) (Unicellular red alga).